We begin with the raw amino-acid sequence, 360 residues long: Probable L-asparaginase 3 (360 aa).

Residues 1-16 form the signal peptide; sequence MWSSIISFLFFSVALC. 3 N-linked (GlcNAc...) asparagine glycosylation sites follow: Asn-27, Asn-35, and Asn-40. The Asparaginase/glutaminase domain occupies 39–359; the sequence is PNVTIFAMGG…QNITDIFSLE (321 aa). Thr-49 (O-isoaspartyl threonine intermediate) is an active-site residue. N-linked (GlcNAc...) asparagine glycosylation is present at Asn-82. Ser-96 is a substrate binding site. A glycan (N-linked (GlcNAc...) asparagine) is linked at Asn-106. 129–130 serves as a coordination point for substrate; the sequence is TD. N-linked (GlcNAc...) asparagine glycans are attached at residues Asn-144, Asn-179, Asn-246, Asn-302, and Asn-351.

The protein belongs to the asparaginase 1 family.

It localises to the secreted. The protein localises to the cell wall. The enzyme catalyses L-asparagine + H2O = L-aspartate + NH4(+). The sequence is that of Probable L-asparaginase 3 from Schizosaccharomyces pombe (strain 972 / ATCC 24843) (Fission yeast).